The sequence spans 207 residues: Peptidyl-tRNA hydrolase (207 aa).

Tyrosine 30 is a binding site for tRNA. Catalysis depends on histidine 35, which acts as the Proton acceptor. TRNA is bound by residues tyrosine 81, asparagine 83, and asparagine 129.

Belongs to the PTH family. In terms of assembly, monomer.

The protein resides in the cytoplasm. It catalyses the reaction an N-acyl-L-alpha-aminoacyl-tRNA + H2O = an N-acyl-L-amino acid + a tRNA + H(+). Its function is as follows. Hydrolyzes ribosome-free peptidyl-tRNAs (with 1 or more amino acids incorporated), which drop off the ribosome during protein synthesis, or as a result of ribosome stalling. In terms of biological role, catalyzes the release of premature peptidyl moieties from peptidyl-tRNA molecules trapped in stalled 50S ribosomal subunits, and thus maintains levels of free tRNAs and 50S ribosomes. The sequence is that of Peptidyl-tRNA hydrolase from Bordetella avium (strain 197N).